We begin with the raw amino-acid sequence, 253 residues long: Phosphate import ATP-binding protein PstB (253 aa).

An ABC transporter domain is found at Ile-5 to Ile-248. ATP is bound at residue Gly-37–Ser-44.

It belongs to the ABC transporter superfamily. Phosphate importer (TC 3.A.1.7) family. In terms of assembly, the complex is composed of two ATP-binding proteins (PstB), two transmembrane proteins (PstC and PstA) and a solute-binding protein (PstS).

Its subcellular location is the cell inner membrane. It catalyses the reaction phosphate(out) + ATP + H2O = ADP + 2 phosphate(in) + H(+). In terms of biological role, part of the ABC transporter complex PstSACB involved in phosphate import. Responsible for energy coupling to the transport system. The sequence is that of Phosphate import ATP-binding protein PstB from Koribacter versatilis (strain Ellin345).